The chain runs to 970 residues: MGKPEARSGWRNAAAAAWVLVAVACAAYMHWHLRRETMDRAEERLVSMCEERARMLQEQFGVTVNHVHALAILISTFHFEKFPSAIDQDTFAKYTARTSFERPLLNGVAYAQRIFHHEREMFENQQGWIMKTMKRQAAPPQDEYAPVIFSQDTVSYLARIDMMSGEEDRENILRARATGKAVLTNPFRLLGSNHLGVVLTFAVYRPGLAADASVEERVEATAGYLGGAFDVESLVENLLSKLAGNQDIVVNVYDVTNASEPMAMYGPQSPDGKVSLFHVSTLDFGDPFRAHEMRCRYRQKPPLPWSAITNPLGTFVIWMLVGYIICAAWSRYDKVSEDCRKMEELKTQAEAADVAKSQFLATVSHEIRTPMNGVLGMLDMLLGTDLSMTQKDYAQTAQMCGRALITLINDVLDRAKIEAGKLELEAVPFDLRSLMDDVISLFSSKSREKCIELAVFVCDDVPKVVIGDPWRYRQILTNLVGNAVKFTERGHVFVRVCLAENSKVEANQVLNGTMNGKDGKVETTANGAFNTLSGFQAADERNNWDYFKLLLSDKEPHMDELECDRSYQNDCDCVTLMISIEDTGVGIPLHAQDRVFTPFMQADSSTSRNYGGTGIGLSISKCLAELMGGQISFTSRPFVGSTFTFSAVLKRSCKDTSSDSKRSLSEALPTAFKGMKAILVDGRPVRGAVTRYHLNRLGIVVKVVNNLSMGLQTLAGQNGVKESREKLSMLFIESDIWRPETDILLLNRLHELKNNGQVHELPKLVLLVTSEADKDRYGSAFDIVMYKPIRASTIASCLQQLLKVVMPERKDNQNRPSFLRSLLIGKNILIVDDNKVNLRVAAAALKKYGAKVHCVESGKDAVSLLQQPHCFDACFMDVQMPEMDGFEATRQIRQMEVKANEERKALDLMEGSTFVESHLPVLAMTADVIQATYEECIKSGMDGYVSKPFDEEQLYQAVSRLVVGTKESAV.

At 1–12 (MGKPEARSGWRN) the chain is on the cytoplasmic side. Residues 13-33 (AAAAAWVLVAVACAAYMHWHL) traverse the membrane as a helical segment. At 34 to 306 (RRETMDRAEE…YRQKPPLPWS (273 aa)) the chain is on the extracellular side. In terms of domain architecture, CHASE spans 82–294 (FPSAIDQDTF…GDPFRAHEMR (213 aa)). Residues 307–327 (AITNPLGTFVIWMLVGYIICA) traverse the membrane as a helical segment. The Cytoplasmic portion of the chain corresponds to 328-970 (AWSRYDKVSE…LVVGTKESAV (643 aa)). Residues 362–651 (TVSHEIRTPM…TFTFSAVLKR (290 aa)) enclose the Histidine kinase domain. Position 365 is a phosphohistidine; by autocatalysis (His-365). Response regulatory domains follow at residues 676 to 802 (KAIL…QQLL) and 827 to 962 (NILI…SRLV). At Asp-877 the chain carries 4-aspartylphosphate.

Post-translationally, activation probably requires a transfer of a phosphate group between a His in the transmitter domain and an Asp of the receiver domain. Highly expressed in spikelets and at lower levels in roots, young leaves, mature leaves and stems.

Its subcellular location is the cell membrane. The catalysed reaction is ATP + protein L-histidine = ADP + protein N-phospho-L-histidine.. Its function is as follows. Cytokinin receptor related to bacterial two-component regulators. Functions as a histidine kinase and transmits the stress signal to a downstream MAPK cascade. The chain is Probable histidine kinase 6 from Oryza sativa subsp. japonica (Rice).